The following is a 476-amino-acid chain: Bifunctional protein GlmU (476 aa).

The interval 1 to 235 (MTALDIIIMA…ALQVAGVNSP (235 aa)) is pyrophosphorylase. UDP-N-acetyl-alpha-D-glucosamine contacts are provided by residues Lys-23, Gln-81, 86–87 (GT), 108–110 (SGD), Gly-145, Glu-160, and Asn-233. Position 110 (Asp-110) interacts with Mg(2+). Asn-233 is a Mg(2+) binding site. Residues 236-256 (AQLADLERAHQRAQAAALMEQ) form a linker region. The interval 257 to 476 (GVRLADPARF…WKRPAKQAKG (220 aa)) is N-acetyltransferase. Arg-351 and Lys-369 together coordinate UDP-N-acetyl-alpha-D-glucosamine. Residue His-381 is the Proton acceptor of the active site. The UDP-N-acetyl-alpha-D-glucosamine site is built by Tyr-384 and Asn-395. Acetyl-CoA contacts are provided by residues Ala-398, 404–405 (NY), Ser-423, Gly-441, and Arg-458.

It in the N-terminal section; belongs to the N-acetylglucosamine-1-phosphate uridyltransferase family. In the C-terminal section; belongs to the transferase hexapeptide repeat family. In terms of assembly, homotrimer. Mg(2+) is required as a cofactor.

It localises to the cytoplasm. It catalyses the reaction alpha-D-glucosamine 1-phosphate + acetyl-CoA = N-acetyl-alpha-D-glucosamine 1-phosphate + CoA + H(+). The enzyme catalyses N-acetyl-alpha-D-glucosamine 1-phosphate + UTP + H(+) = UDP-N-acetyl-alpha-D-glucosamine + diphosphate. It participates in nucleotide-sugar biosynthesis; UDP-N-acetyl-alpha-D-glucosamine biosynthesis; N-acetyl-alpha-D-glucosamine 1-phosphate from alpha-D-glucosamine 6-phosphate (route II): step 2/2. The protein operates within nucleotide-sugar biosynthesis; UDP-N-acetyl-alpha-D-glucosamine biosynthesis; UDP-N-acetyl-alpha-D-glucosamine from N-acetyl-alpha-D-glucosamine 1-phosphate: step 1/1. It functions in the pathway bacterial outer membrane biogenesis; LPS lipid A biosynthesis. Functionally, catalyzes the last two sequential reactions in the de novo biosynthetic pathway for UDP-N-acetylglucosamine (UDP-GlcNAc). The C-terminal domain catalyzes the transfer of acetyl group from acetyl coenzyme A to glucosamine-1-phosphate (GlcN-1-P) to produce N-acetylglucosamine-1-phosphate (GlcNAc-1-P), which is converted into UDP-GlcNAc by the transfer of uridine 5-monophosphate (from uridine 5-triphosphate), a reaction catalyzed by the N-terminal domain. This is Bifunctional protein GlmU from Acidovorax sp. (strain JS42).